The following is a 331-amino-acid chain: Leucine-rich repeat-containing protein 26 (331 aa).

An N-terminal signal peptide occupies residues 1–26 (MRGSFFSRLPPQLSLLLLLSLRRVWT). The Extracellular segment spans residues 27–261 (QEDIGTAPSK…QCTQSLAARD (235 aa)). The 38-residue stretch at 34–71 (PSKSPVAPECPEACSCSLGGKANCSALALPAVPADLSW) folds into the LRRNT domain. Disulfide bonds link cysteine 43-cysteine 49 and cysteine 47-cysteine 57. 5 LRR repeats span residues 72-93 (QVRSLLLDHNRVSALPPGAFAN), 96-117 (ALLYLDLRENRLRSVHARAFWG), 120-141 (VLQWLDLSSNQLETLPPGTFAP), 144-165 (ALSFLSLAGNRLALLEPSILGP), and 168-191 (LLRVLSLQDNSLSAIEAGLLNNLP). Residues 201 to 255 (NPWTCNCALRPLCTWLRKHPRPASETETLLCVSPRLQTLSLLTAFPDAAFKQCTQ) enclose the LRRCT domain. 2 disulfide bridges follow: cysteine 205/cysteine 231 and cysteine 207/cysteine 253. The helical transmembrane segment at 262–282 (LAVVYALGPVSFLASLAICLA) threads the bilayer. The Cytoplasmic portion of the chain corresponds to 283-331 (LGSVLTACGARRRRRRRTTVRHLLRRQLDPEGPPSLEDAGSPVTAAIQA). A disordered region spans residues 310–331 (LDPEGPPSLEDAGSPVTAAIQA).

Interacts with KCNMA1.

The protein localises to the cell membrane. The protein resides in the cytoplasm. Its subcellular location is the cytoskeleton. In terms of biological role, auxiliary protein of the large-conductance, voltage and calcium-activated potassium channel (BK alpha). Required for the conversion of BK alpha channels from a high-voltage to a low-voltage activated channel type in non-excitable cells. These are characterized by negative membrane voltages and constant low levels of calcium. In Mus musculus (Mouse), this protein is Leucine-rich repeat-containing protein 26 (Lrrc26).